Reading from the N-terminus, the 400-residue chain is Phosphoglycerate kinase (400 aa).

Residues 21–23 (DLN), Arg36, 59–62 (HLGR), Arg116, and Arg149 each bind substrate. ATP-binding positions include Lys200, Glu317, and 343–346 (GGDT).

It belongs to the phosphoglycerate kinase family. In terms of assembly, monomer.

The protein localises to the cytoplasm. The enzyme catalyses (2R)-3-phosphoglycerate + ATP = (2R)-3-phospho-glyceroyl phosphate + ADP. Its pathway is carbohydrate degradation; glycolysis; pyruvate from D-glyceraldehyde 3-phosphate: step 2/5. The polypeptide is Phosphoglycerate kinase (Blochmanniella floridana).